A 184-amino-acid chain; its full sequence is ATP synthase subunit b, chloroplastic (184 aa).

A helical membrane pass occupies residues 27-49 (LATNPINLSVVLGVLIFFGKGVL).

Belongs to the ATPase B chain family. As to quaternary structure, F-type ATPases have 2 components, F(1) - the catalytic core - and F(0) - the membrane proton channel. F(1) has five subunits: alpha(3), beta(3), gamma(1), delta(1), epsilon(1). F(0) has four main subunits: a(1), b(1), b'(1) and c(10-14). The alpha and beta chains form an alternating ring which encloses part of the gamma chain. F(1) is attached to F(0) by a central stalk formed by the gamma and epsilon chains, while a peripheral stalk is formed by the delta, b and b' chains.

Its subcellular location is the plastid. The protein resides in the chloroplast thylakoid membrane. In terms of biological role, f(1)F(0) ATP synthase produces ATP from ADP in the presence of a proton or sodium gradient. F-type ATPases consist of two structural domains, F(1) containing the extramembraneous catalytic core and F(0) containing the membrane proton channel, linked together by a central stalk and a peripheral stalk. During catalysis, ATP synthesis in the catalytic domain of F(1) is coupled via a rotary mechanism of the central stalk subunits to proton translocation. Its function is as follows. Component of the F(0) channel, it forms part of the peripheral stalk, linking F(1) to F(0). The sequence is that of ATP synthase subunit b, chloroplastic from Cuscuta exaltata (Tall dodder).